The sequence spans 839 residues: Homeobox-leucine zipper protein HOX10 (839 aa).

Disordered regions lie at residues 1–24 (MAAAVAMRGSSSDGGGYDKVSGMD) and 132–157 (QNTPLANDTSCESNVTTPQNPLRDAS). Residues 24-87 (DSGKYVRYTP…NRRCRDKQRK (64 aa)) constitute a DNA-binding region (homeobox). A coiled-coil region spans residues 91 to 134 (RLQAVNRKLTAMNKLLMEENERLQKQVSQLVHENAHMRQQLQNT). The START domain occupies 155 to 383 (DASNPSGLLS…IAQETSGEVV (229 aa)).

The protein belongs to the HD-ZIP homeobox family. Class III subfamily. Expressed in stems, leaf sheaths and blades and panicles.

It localises to the nucleus. Its function is as follows. Probable transcription factor. This chain is Homeobox-leucine zipper protein HOX10 (HOX10), found in Oryza sativa subsp. indica (Rice).